We begin with the raw amino-acid sequence, 187 residues long: MSDDGEQPGPGDGAARDELSGMDLVRRTLAEARAAARARGQDPGRGFAAGPAPRRVAGRRRSWSGPGPDTRDPQPLGKLTRDLAKKRGWSGHVAEGTVLGQWSRVVGAQIADHATPTALNEGVLSVTAESTAWATQLRIMQSQLLAKIAAAVGNGVVTSLKITGPASPSWRKGPRHIAGRGPRDTYG.

Disordered stretches follow at residues 1-77 (MSDD…QPLG) and 166-187 (ASPSWRKGPRHIAGRGPRDTYG). A compositionally biased stretch (basic and acidic residues) spans 14-30 (AARDELSGMDLVRRTLA). Residues 31–55 (EARAAARARGQDPGRGFAAGPAPRR) show a composition bias toward low complexity.

The protein belongs to the UPF0232 family.

This chain is UPF0232 protein MMAR_0004, found in Mycobacterium marinum (strain ATCC BAA-535 / M).